A 223-amino-acid polypeptide reads, in one-letter code: MAIFASAGAAPVITIDGPTASGKGTIAHRVAKQLGWDVLDSGALYRLTALAALRRGLPATDEPAVAAVAQALDVRFDGPHVYLEGRDAGHEIRQEEVGNYASRIAAYPGVRQALLERQRAFRQPPGLVADGRDMGAVVFPDASLKIFLVADVEARAQRRCKQLIEKGISANLDDLLRDMRERDARDTQRAVAPLAPAADAHVLDSSGLTIEQTVQAVLDFWCA.

17-25 (GPTASGKGT) is a binding site for ATP.

The protein belongs to the cytidylate kinase family. Type 1 subfamily.

The protein resides in the cytoplasm. It catalyses the reaction CMP + ATP = CDP + ADP. The enzyme catalyses dCMP + ATP = dCDP + ADP. The polypeptide is Cytidylate kinase (Bordetella pertussis (strain Tohama I / ATCC BAA-589 / NCTC 13251)).